A 97-amino-acid chain; its full sequence is M-zodatoxin-Lt7a (97 aa).

Positions 1 to 22 (MKFYVVALALLVAFVCIAESRS) are cleaved as a signal peptide. The propeptide occupies 23–63 (VETERAVDADLEDDLDDLEEYLEGIAEALELEDFPDTEEAR). The short motif at 60–63 (EEAR) is the Processing quadruplet motif element.

Post-translationally, cleavage of the propeptide depends on the processing quadruplet motif (XXXR, with at least one of X being E). As to expression, expressed by the venom gland.

The protein resides in the secreted. Does not have antimicrobial or antifungal activity. Does not have hemolytic activity against rabbit erythrocytes. However, it causes some conductance changes in planar bilayer membranes, without membrane rupture, suggesting a cytolytic function on other biological targets. It causes paralysis, but is not lethal when injected into insect (M.domestica) larvae. This is M-zodatoxin-Lt7a from Lachesana tarabaevi (Spider).